The chain runs to 198 residues: Transcription factor FapR (198 aa).

The region spanning 102–169 is the MaoC-like domain; sequence NRIARGHHLF…RTIVEVNSYV (68 aa).

It belongs to the FapR family.

In terms of biological role, transcriptional factor involved in regulation of membrane lipid biosynthesis by repressing genes involved in fatty acid and phospholipid metabolism. The polypeptide is Transcription factor FapR (Geobacillus sp. (strain WCH70)).